The chain runs to 89 residues: MALDAAIKNQIITEYATHEGDTGSPEVQIAVLSRRISDLTEHLKMHKHDHHTRRGLMALVGRRRRMLDYLRRTDIARYRALIERLGLRK.

It belongs to the universal ribosomal protein uS15 family. In terms of assembly, part of the 30S ribosomal subunit. Forms a bridge to the 50S subunit in the 70S ribosome, contacting the 23S rRNA.

In terms of biological role, one of the primary rRNA binding proteins, it binds directly to 16S rRNA where it helps nucleate assembly of the platform of the 30S subunit by binding and bridging several RNA helices of the 16S rRNA. Its function is as follows. Forms an intersubunit bridge (bridge B4) with the 23S rRNA of the 50S subunit in the ribosome. This is Small ribosomal subunit protein uS15 from Kocuria rhizophila (strain ATCC 9341 / DSM 348 / NBRC 103217 / DC2201).